The sequence spans 134 residues: MVKNTIEESVATGRRKQAVSSVRLRPGTGKIDVNGKAFEEYFPLEIQRVTILSPLMKVLGTTNECDLIIRINGGGIQGQVIATRLGLARALLKKNVDSKQELKSHGFLTRDPRKKERKKYGHKKARKSFQFSKR.

The span at 98 to 114 shows a compositional bias: basic and acidic residues; the sequence is SKQELKSHGFLTRDPRK. The tract at residues 98–134 is disordered; sequence SKQELKSHGFLTRDPRKKERKKYGHKKARKSFQFSKR. Residues 115-134 are compositionally biased toward basic residues; sequence KERKKYGHKKARKSFQFSKR.

This sequence belongs to the universal ribosomal protein uS9 family.

This Chlamydia caviae (strain ATCC VR-813 / DSM 19441 / 03DC25 / GPIC) (Chlamydophila caviae) protein is Small ribosomal subunit protein uS9.